The chain runs to 333 residues: Protein farnesyltransferase/geranylgeranyltransferase type-1 subunit alpha (333 aa).

PFTA repeat units follow at residues 61-95 (LSSRALALTAEAIGLNAGNYTVWHFRRLLLESLKV), 96-130 (DLHVEREFVERVASGNSKNYQIWHHRRWVAEKLGP), 132-166 (ARNSELEFTKKILSVDAKHYHAWSHRQWVLQNLGG), 167-200 (WEDELSYCSELLAEDIFNNSAWNQRYFVITRSPV), and 207-241 (MRESEVLFTVEAIISYPENESSWRYLRGLFKDEST).

It belongs to the protein prenyltransferase subunit alpha family. As to quaternary structure, heterodimer of FTA and FTB (farnesyltransferase). Heterodimer of an alpha and a beta subunit. Mg(2+) is required as a cofactor.

The catalysed reaction is L-cysteinyl-[protein] + (2E,6E)-farnesyl diphosphate = S-(2E,6E)-farnesyl-L-cysteinyl-[protein] + diphosphate. The enzyme catalyses geranylgeranyl diphosphate + L-cysteinyl-[protein] = S-geranylgeranyl-L-cysteinyl-[protein] + diphosphate. Its function is as follows. Essential subunit of both the farnesyltransferase and the geranylgeranyltransferase complex. Contributes to the transfer of a farnesyl or geranylgeranyl moiety from farnesyl or geranylgeranyl diphosphate to a cysteine at the fourth position from the C-terminus of several proteins having the C-terminal sequence Cys-aliphatic-aliphatic-X. The polypeptide is Protein farnesyltransferase/geranylgeranyltransferase type-1 subunit alpha (FTA) (Pisum sativum (Garden pea)).